A 481-amino-acid polypeptide reads, in one-letter code: Cis-aconitate decarboxylase (481 aa).

The tract at residues 462–481 (SPPEVASNSPACNNSITNLS) is disordered. Over residues 467–481 (ASNSPACNNSITNLS) the composition is skewed to polar residues.

It belongs to the PrpD family. In terms of assembly, homodimer. As to expression, expressed in LPS-tolerized macrophages (at protein level). Expressed in peripheral blood mononuclear cells (PBMCs), microglia and macrophage cells.

Its subcellular location is the mitochondrion. It carries out the reaction cis-aconitate + H(+) = itaconate + CO2. Functionally, cis-aconitate decarboxylase that catalyzes production of itaconate and is involved in the inhibition of the inflammatory response. Acts as a negative regulator of the Toll-like receptors (TLRs)-mediated inflammatory innate response by stimulating the tumor necrosis factor alpha-induced protein TNFAIP3 expression via reactive oxygen species (ROS) in LPS-tolerized macrophages. Involved in antimicrobial response of innate immune cells; ACOD1-mediated itaconic acid production contributes to the antimicrobial activity of macrophages by generating itaconate, leading to alkylation of proteins, such as TFEB. Involved in antiviral response following infection by flavivirus in neurons: ACOD1-mediated itaconate production inhibits the activity of succinate dehydrogenase, generating a metabolic state in neurons that suppresses replication of viral genomes. Plays a role in the embryo implantation. The chain is Cis-aconitate decarboxylase from Homo sapiens (Human).